A 242-amino-acid chain; its full sequence is ATP synthase subunit a (242 aa).

The next 6 helical transmembrane spans lie at 29–49, 84–104, 114–134, 140–160, 189–209, and 210–230; these read SSIY…LAFY, FIPL…LGMT, IIVT…VGFV, FLTL…MIVI, VIAG…IPLM, and VILI…FTIL.

This sequence belongs to the ATPase A chain family. As to quaternary structure, F-type ATPases have 2 components, CF(1) - the catalytic core - and CF(0) - the membrane proton channel. CF(1) has five subunits: alpha(3), beta(3), gamma(1), delta(1), epsilon(1). CF(0) has three main subunits: a(1), b(2) and c(9-12). The alpha and beta chains form an alternating ring which encloses part of the gamma chain. CF(1) is attached to CF(0) by a central stalk formed by the gamma and epsilon chains, while a peripheral stalk is formed by the delta and b chains.

The protein localises to the cell inner membrane. Functionally, key component of the proton channel; it plays a direct role in the translocation of protons across the membrane. This chain is ATP synthase subunit a, found in Rickettsia felis (strain ATCC VR-1525 / URRWXCal2) (Rickettsia azadi).